Reading from the N-terminus, the 686-residue chain is Glycine--tRNA ligase beta subunit (686 aa).

Belongs to the class-II aminoacyl-tRNA synthetase family. In terms of assembly, tetramer of two alpha and two beta subunits.

Its subcellular location is the cytoplasm. It carries out the reaction tRNA(Gly) + glycine + ATP = glycyl-tRNA(Gly) + AMP + diphosphate. The chain is Glycine--tRNA ligase beta subunit from Geobacter metallireducens (strain ATCC 53774 / DSM 7210 / GS-15).